The primary structure comprises 419 residues: 1,4-beta-D-glucan cellobiohydrolase CEL6B (419 aa).

A signal peptide spans 1–47 (MGESFLLLQPASPALSPTPSSLLLGPTITMRADVLIAALATGALVAA). 2 residues coordinate substrate: Trp-111 and Ser-113. Active-site proton donor residues include Asp-152 and Asp-199. Position 247 (Trp-247) interacts with substrate. A glycan (N-linked (GlcNAc...) asparagine) is linked at Asn-284. Asn-287 provides a ligand contact to substrate. A glycan (N-linked (GlcNAc...) asparagine) is linked at Asn-298. Trp-347 lines the substrate pocket. N-linked (GlcNAc...) asparagine glycosylation is present at Asn-364. Substrate contacts are provided by Lys-375 and Glu-379.

This sequence belongs to the glycosyl hydrolase 6 (cellulase B) family. Post-translationally, both N- and O-glycosylated.

The protein localises to the secreted. It carries out the reaction Hydrolysis of (1-&gt;4)-beta-D-glucosidic linkages in cellulose and cellotetraose, releasing cellobiose from the non-reducing ends of the chains.. Its function is as follows. Exoglucanase that plays an important function in biomass degradation by catalyzing the hydrolysis of the non-reducing end beta-1,4-glucosidic linkages in cellulose and cellotetraose to release cellobiose. Hydrolyzes crystalline and amorphous cellulose but is inactive on hydroxyethyl cellulose, mannan, galactomannan, xyloglucan, arabinoxylan, arabinan, xylan, and pectin. The chain is 1,4-beta-D-glucan cellobiohydrolase CEL6B from Podospora anserina (strain S / ATCC MYA-4624 / DSM 980 / FGSC 10383) (Pleurage anserina).